Consider the following 345-residue polypeptide: Biotin synthase (345 aa).

In terms of domain architecture, Radical SAM core spans 66–293; it reads NTVQLSTLLS…RAMVRLSAGR (228 aa). 3 residues coordinate [4Fe-4S] cluster: C81, C85, and C88. [2Fe-2S] cluster contacts are provided by C125, C156, C216, and R288.

The protein belongs to the radical SAM superfamily. Biotin synthase family. As to quaternary structure, homodimer. Requires [4Fe-4S] cluster as cofactor. It depends on [2Fe-2S] cluster as a cofactor.

It carries out the reaction (4R,5S)-dethiobiotin + (sulfur carrier)-SH + 2 reduced [2Fe-2S]-[ferredoxin] + 2 S-adenosyl-L-methionine = (sulfur carrier)-H + biotin + 2 5'-deoxyadenosine + 2 L-methionine + 2 oxidized [2Fe-2S]-[ferredoxin]. The protein operates within cofactor biosynthesis; biotin biosynthesis; biotin from 7,8-diaminononanoate: step 2/2. Catalyzes the conversion of dethiobiotin (DTB) to biotin by the insertion of a sulfur atom into dethiobiotin via a radical-based mechanism. This chain is Biotin synthase, found in Cupriavidus metallidurans (strain ATCC 43123 / DSM 2839 / NBRC 102507 / CH34) (Ralstonia metallidurans).